The sequence spans 179 residues: Translation initiation factor IF-3 (179 aa).

This sequence belongs to the IF-3 family. As to quaternary structure, monomer.

It is found in the cytoplasm. Its function is as follows. IF-3 binds to the 30S ribosomal subunit and shifts the equilibrium between 70S ribosomes and their 50S and 30S subunits in favor of the free subunits, thus enhancing the availability of 30S subunits on which protein synthesis initiation begins. The chain is Translation initiation factor IF-3 from Bradyrhizobium diazoefficiens (strain JCM 10833 / BCRC 13528 / IAM 13628 / NBRC 14792 / USDA 110).